A 411-amino-acid polypeptide reads, in one-letter code: Bifunctional protein GlmU (411 aa).

Positions 1–204 are pyrophosphorylase; that stretch reads MDAIILCAGK…NGKLHGVELK (204 aa). Residues 6 to 9, Gln74, and Gly79 contribute to the UTP site; that span reads LCAG. 4 residues coordinate N-acetyl-alpha-D-glucosamine 1-phosphate: Thr80, Gly130, Asn142, and Asn158. A linker region spans residues 205–224; that stretch reads GYWNDIGHPWDVLSANNHFL. The segment at 225–411 is N-acetyltransferase; it reads NKIISKVSGK…DELVITKKRN (187 aa). Residue His308 is the Proton acceptor of the active site. Positions 384 and 401 each coordinate acetyl-CoA.

The protein in the N-terminal section; belongs to the N-acetylglucosamine-1-phosphate uridyltransferase family. It in the C-terminal section; belongs to the transferase hexapeptide repeat family.

It catalyses the reaction N-acetyl-alpha-D-glucosamine 1-phosphate + UTP + H(+) = UDP-N-acetyl-alpha-D-glucosamine + diphosphate. The enzyme catalyses alpha-D-glucosamine 1-phosphate + acetyl-CoA = N-acetyl-alpha-D-glucosamine 1-phosphate + CoA + H(+). The protein operates within nucleotide-sugar biosynthesis; UDP-N-acetyl-alpha-D-glucosamine biosynthesis; N-acetyl-alpha-D-glucosamine 1-phosphate from alpha-D-glucosamine 6-phosphate (route II): step 2/2. It participates in nucleotide-sugar biosynthesis; UDP-N-acetyl-alpha-D-glucosamine biosynthesis; UDP-N-acetyl-alpha-D-glucosamine from N-acetyl-alpha-D-glucosamine 1-phosphate: step 1/1. Functionally, catalyzes the last two sequential reactions in the de novo biosynthetic pathway for UDP-N-acetyl-glucosamine (UDP-GlcNAc). Responsible for the acetylation of GlcN-1-P to GlcNAc-1-P, and for the uridyl transfer from UTP to GlcNAc-1-P, to produce UDP-GlcNAc and pyrophosphate. This chain is Bifunctional protein GlmU, found in Methanococcus maripaludis (strain DSM 14266 / JCM 13030 / NBRC 101832 / S2 / LL).